The chain runs to 215 residues: Pyrrolidone-carboxylate peptidase (215 aa).

Active-site residues include glutamate 80, cysteine 143, and histidine 167.

It belongs to the peptidase C15 family. Homotetramer.

The protein resides in the cytoplasm. It catalyses the reaction Release of an N-terminal pyroglutamyl group from a polypeptide, the second amino acid generally not being Pro.. In terms of biological role, removes 5-oxoproline from various penultimate amino acid residues except L-proline. The polypeptide is Pyrrolidone-carboxylate peptidase (Bacillus anthracis).